Consider the following 210-residue polypeptide: MPAVRSKICGITRIEDALAAVAAGADAIGLVFYAKSPRAVNVQQARAIIAALPPFVTSVGLFVNASRCELGEILDAVPLDLLQFHGDESAADCEGYHRPYIKALRVKAGDDIAAACLAYPRASGILLDTYVEGVPGGTGEAFDWSLVPQGLSKPIILAGGLTPDNVAAAIARVRPYAVDVSGGVEQGKGIKDPAKIQAFMQAVRRSNESM.

It belongs to the TrpF family.

The enzyme catalyses N-(5-phospho-beta-D-ribosyl)anthranilate = 1-(2-carboxyphenylamino)-1-deoxy-D-ribulose 5-phosphate. The protein operates within amino-acid biosynthesis; L-tryptophan biosynthesis; L-tryptophan from chorismate: step 3/5. In Pseudomonas fluorescens (strain ATCC BAA-477 / NRRL B-23932 / Pf-5), this protein is N-(5'-phosphoribosyl)anthranilate isomerase.